Reading from the N-terminus, the 319-residue chain is Meiotic drive suppressor wtf16 (319 aa).

Disordered regions lie at residues 1–22 and 35–68; these read MKNNYTSLKSPIDEGDESKTGH and DSEEEGALPPYSDHARVSNSPNTHRENNPSRSTD. 6 helical membrane-spanning segments follow: residues 73 to 93, 110 to 130, 153 to 173, 187 to 207, 215 to 235, and 241 to 261; these read FLIKLLISFTPIYVLNVLAIC, WTLFGFWCLVCTLALIFLTYF, VVIIWLLWVVICFVLFGCIKF, CSISAALLLFLLYVRLPFWTL, FQVLGVQSCVVIVTKGLMYLF, and ATGYEIEATSLFVIGNFFFFY.

Belongs to the WTF family. Homomer. Interacts with other proteins that exhibit high sequence similarity.

It is found in the spore membrane. It localises to the vacuole membrane. In terms of biological role, acts as a suppressor component of the dual wtf meiotic drive system, and can suppress but not confer meiotic drive by compatible poisons. Wtf meiotic drive systems promote unequal transmission of alleles from the parental zygote to progeny spores by encoding a poison and an antidote from the same locus; the poison is trans-acting and forms toxic aggregates in all spores within an ascus, wherease the antidote is spore-specific and targets aggregates for degradation by the vacuole. Meiotic drive by wtf systems therefore lead to poisoning of all progeny that do not inherit the dual poison/antidote allele, or express a compatible antidote. The sequence is that of Meiotic drive suppressor wtf16 from Schizosaccharomyces pombe (strain 972 / ATCC 24843) (Fission yeast).